Here is a 238-residue protein sequence, read N- to C-terminus: Octanoyltransferase (238 aa).

A BPL/LPL catalytic domain is found at 40–220 (AGGSDALLLL…RVCDALDGRL (181 aa)). Substrate-binding positions include 78-85 (RGGKITWH), 150-152 (AIG), and 163-165 (GFA). The active-site Acyl-thioester intermediate is the Cys-181.

This sequence belongs to the LipB family.

Its subcellular location is the cytoplasm. It catalyses the reaction octanoyl-[ACP] + L-lysyl-[protein] = N(6)-octanoyl-L-lysyl-[protein] + holo-[ACP] + H(+). Its pathway is protein modification; protein lipoylation via endogenous pathway; protein N(6)-(lipoyl)lysine from octanoyl-[acyl-carrier-protein]: step 1/2. Functionally, catalyzes the transfer of endogenously produced octanoic acid from octanoyl-acyl-carrier-protein onto the lipoyl domains of lipoate-dependent enzymes. Lipoyl-ACP can also act as a substrate although octanoyl-ACP is likely to be the physiological substrate. The polypeptide is Octanoyltransferase (Mycobacterium sp. (strain JLS)).